Reading from the N-terminus, the 768-residue chain is Phosphoribosylformylglycinamidine synthase subunit PurL (768 aa).

Residue histidine 53 is part of the active site. Residue tyrosine 56 coordinates ATP. Mg(2+) is bound at residue glutamate 98. Substrate is bound by residues 99-102 and arginine 121; that span reads SHNH. Histidine 100 (proton acceptor) is an active-site residue. Position 122 (aspartate 122) interacts with Mg(2+). Residue glutamine 253 coordinates substrate. Aspartate 285 is a binding site for Mg(2+). 328 to 330 provides a ligand contact to substrate; it reads ETQ. ATP contacts are provided by aspartate 516 and glycine 561. Asparagine 562 provides a ligand contact to Mg(2+). Substrate is bound at residue serine 564.

The protein belongs to the FGAMS family. Monomer. Part of the FGAM synthase complex composed of 1 PurL, 1 PurQ and 2 PurS subunits.

It localises to the cytoplasm. The catalysed reaction is N(2)-formyl-N(1)-(5-phospho-beta-D-ribosyl)glycinamide + L-glutamine + ATP + H2O = 2-formamido-N(1)-(5-O-phospho-beta-D-ribosyl)acetamidine + L-glutamate + ADP + phosphate + H(+). It participates in purine metabolism; IMP biosynthesis via de novo pathway; 5-amino-1-(5-phospho-D-ribosyl)imidazole from N(2)-formyl-N(1)-(5-phospho-D-ribosyl)glycinamide: step 1/2. Its function is as follows. Part of the phosphoribosylformylglycinamidine synthase complex involved in the purines biosynthetic pathway. Catalyzes the ATP-dependent conversion of formylglycinamide ribonucleotide (FGAR) and glutamine to yield formylglycinamidine ribonucleotide (FGAM) and glutamate. The FGAM synthase complex is composed of three subunits. PurQ produces an ammonia molecule by converting glutamine to glutamate. PurL transfers the ammonia molecule to FGAR to form FGAM in an ATP-dependent manner. PurS interacts with PurQ and PurL and is thought to assist in the transfer of the ammonia molecule from PurQ to PurL. The chain is Phosphoribosylformylglycinamidine synthase subunit PurL from Methanothrix thermoacetophila (strain DSM 6194 / JCM 14653 / NBRC 101360 / PT) (Methanosaeta thermophila).